Here is a 270-residue protein sequence, read N- to C-terminus: MTVITKIEVQKRSKERFNIYIDKGQGEEYGFSVNQSILMKHGLQKGLEIDEVALGNILYNEEVQKAYLQAISYLSYQMRTKQEIEDFLRKKEVGQAIISEVVSKLLHDRYINDKEYAISYVRTQSNVNQKGPTVIRRGLLSKGVQDLIITHSLQEYPKEKQMENALFLIEKKKKSYQKHSFLQMKLKLDEMLVRKGYSRDVIQICLEELKDEKDDEQQQEALHYHGNKYYEKYKKYDGWTFENKVKQALYRKGFSIDEIDIFLQMKREEG.

This sequence belongs to the RecX family.

The protein localises to the cytoplasm. Functionally, modulates RecA activity. The polypeptide is Regulatory protein RecX (Bacillus mycoides (strain KBAB4) (Bacillus weihenstephanensis)).